The following is a 488-amino-acid chain: Glutamyl-tRNA(Gln) amidotransferase subunit A (488 aa).

Catalysis depends on charge relay system residues K78 and S153. The active-site Acyl-ester intermediate is S177.

This sequence belongs to the amidase family. GatA subfamily. In terms of assembly, heterotrimer of A, B and C subunits.

It carries out the reaction L-glutamyl-tRNA(Gln) + L-glutamine + ATP + H2O = L-glutaminyl-tRNA(Gln) + L-glutamate + ADP + phosphate + H(+). Allows the formation of correctly charged Gln-tRNA(Gln) through the transamidation of misacylated Glu-tRNA(Gln) in organisms which lack glutaminyl-tRNA synthetase. The reaction takes place in the presence of glutamine and ATP through an activated gamma-phospho-Glu-tRNA(Gln). The protein is Glutamyl-tRNA(Gln) amidotransferase subunit A of Caldanaerobacter subterraneus subsp. tengcongensis (strain DSM 15242 / JCM 11007 / NBRC 100824 / MB4) (Thermoanaerobacter tengcongensis).